Here is a 244-residue protein sequence, read N- to C-terminus: Transcriptional regulatory protein YpdB (244 aa).

The Response regulatory domain maps to 2–116; that stretch reads KVIIVEDEFL…RITGMLQKLE (115 aa). Asp53 bears the 4-aspartylphosphate mark. The region spanning 139 to 244 is the HTH LytTR-type domain; the sequence is INLVKDERII…VKEFRQLMHL (106 aa).

Phosphorylated by YpdA.

Its subcellular location is the cytoplasm. Member of the two-component regulatory system YpdA/YpdB. YpdB regulates expression of yhjX by binding to its promoter region. The sequence is that of Transcriptional regulatory protein YpdB (ypdB) from Escherichia coli O157:H7.